We begin with the raw amino-acid sequence, 336 residues long: tRNA N6-adenosine threonylcarbamoyltransferase (336 aa).

Fe cation-binding residues include histidine 111 and histidine 115. Substrate contacts are provided by residues 133-137 (LISGG), aspartate 166, glycine 179, and asparagine 276. Aspartate 301 contributes to the Fe cation binding site.

This sequence belongs to the KAE1 / TsaD family. Requires Fe(2+) as cofactor.

It is found in the cytoplasm. The catalysed reaction is L-threonylcarbamoyladenylate + adenosine(37) in tRNA = N(6)-L-threonylcarbamoyladenosine(37) in tRNA + AMP + H(+). Its function is as follows. Required for the formation of a threonylcarbamoyl group on adenosine at position 37 (t(6)A37) in tRNAs that read codons beginning with adenine. Is involved in the transfer of the threonylcarbamoyl moiety of threonylcarbamoyl-AMP (TC-AMP) to the N6 group of A37, together with TsaE and TsaB. TsaD likely plays a direct catalytic role in this reaction. The protein is tRNA N6-adenosine threonylcarbamoyltransferase of Wolbachia pipientis subsp. Culex pipiens (strain wPip).